The sequence spans 66 residues: Conotoxin Ca5.2 (66 aa).

The first 22 residues, 1–22 (MRCVPVFLILLGLIASAPSVDA), serve as a signal peptide directing secretion. Positions 23-48 (RPQTKDDALASFHDSAKRHLQRLVNA) are excised as a propeptide. Phenylalanine amide is present on F62.

Belongs to the conotoxin T superfamily. Contains 2 disulfide bonds that can be either 'C1-C3, C2-C4' or 'C1-C4, C2-C3', since these disulfide connectivities have been observed for conotoxins with cysteine framework V (for examples, see AC P0DQQ7 and AC P81755). As to expression, expressed by the venom duct.

It is found in the secreted. In Conus caracteristicus (Characteristic cone), this protein is Conotoxin Ca5.2.